Here is a 1032-residue protein sequence, read N- to C-terminus: MARLGRFGFLALAVVFHLIYAYSIFDIYFVSPIVSGMRSYGVEREPGAKAPASRLVLFVADGLRADKAFQPAPDPSPEDGEDAENNDPIYLAPFIRSRVLSHGTFGVSHTRVPTESRPGHVALIAGLYEDVSAVTTGWKLNPVNFDSVFNQSRHTWSWGSPDILAMFKEGAVPGRVDADMYGEEIEDFTMDATQLDTWVFNKVKELFASAKSDPELDAKLRQDKVVFFLHLLGLDTTGHGYRPYSREYLHNIKIVDKGVQEIATLIEEFYGDDRTAFVFTADHGMSDWGSHGDGHPDNTRTPLVVWGSGVAGPKYTDGKAVTGHEDGFSADWGLDGIQRHDVAQADVAALMAYLAGLDFPVNSVGQLPLEYIDASPKEKALAALANTQEVLEMYRVKEAQKRAALLRYKPFEPLADHGKNSVEEHIAEIQVLIANGSYDEPIKRSGALFATALEGLRYLQTYDWLFLRTIITFGYLGWIAYALTTVIDLHVLHRTSDSKRTVGSTIFFTSILAALFSVLLYQKSSWQYYVYGAFPIFFWEEVFARRKALIAGREILLGHVRSFGGYIASGFQLVAFVAVLEALLMRHQVQSYFHREIYTVCFVLGSFWPILYGVDFVRQNTVLSATWAVGCSLMSTFTLLPVIKVENINTITYGALLMFFTGLFYLLFEDTILKHSKSSGHAPGAISSLGSRVIMGMQVGMVLLALIVTRSSVSSLQAKQGLPFGNQVVGWFVLVASLVLPFFHRLYPNSHYLHRLMVLFLTFSPTFIILTISYEGLFYFVFCMTLVTWVRLEHAIYVYTARSSAHYGGNNTVPKKPGLNATAVIDGQEYRYRRLGLADTRVALFFFFLLQSAFFSTGNIASVSSFSLESVFRLIPVFSPFSQSALLILKLLIPFAIISANLGILNRRLEVAPSALFMVVMSISDVMTLNFFYMVRDEGSWLDIGTTISHFLIASFLCTFVAGLEFLSEVFISGVDFGPTTKAIGASITKTVGGTAGSDVVDSQSGPEDAANSKKAEGLEGSETIRQNGGSV.

Residues 1–6 (MARLGR) lie on the Cytoplasmic side of the membrane. Residues 7 to 27 (FGFLALAVVFHLIYAYSIFDI) traverse the membrane as a helical segment. Residues 28-468 (YFVSPIVSGM…LQTYDWLFLR (441 aa)) lie on the Lumenal side of the membrane. 2 N-linked (GlcNAc...) asparagine glycosylation sites follow: Asn150 and Asn435. Residues 469–489 (TIITFGYLGWIAYALTTVIDL) form a helical membrane-spanning segment. Residues 490–500 (HVLHRTSDSKR) lie on the Cytoplasmic side of the membrane. Residues 501–521 (TVGSTIFFTSILAALFSVLLY) form a helical membrane-spanning segment. The Lumenal portion of the chain corresponds to 522–523 (QK). The helical transmembrane segment at 524–544 (SSWQYYVYGAFPIFFWEEVFA) threads the bilayer. The Cytoplasmic segment spans residues 545-564 (RRKALIAGREILLGHVRSFG). The chain crosses the membrane as a helical span at residues 565–585 (GYIASGFQLVAFVAVLEALLM). Over 586-596 (RHQVQSYFHRE) the chain is Lumenal. The helical transmembrane segment at 597-617 (IYTVCFVLGSFWPILYGVDFV) threads the bilayer. At 618 to 622 (RQNTV) the chain is on the cytoplasmic side. The helical transmembrane segment at 623–643 (LSATWAVGCSLMSTFTLLPVI) threads the bilayer. At 644-647 (KVEN) the chain is on the lumenal side. Residues 648 to 668 (INTITYGALLMFFTGLFYLLF) traverse the membrane as a helical segment. Residues 669 to 688 (EDTILKHSKSSGHAPGAISS) are Cytoplasmic-facing. The chain crosses the membrane as a helical span at residues 689–709 (LGSRVIMGMQVGMVLLALIVT). At 710–722 (RSSVSSLQAKQGL) the chain is on the lumenal side. A helical membrane pass occupies residues 723 to 743 (PFGNQVVGWFVLVASLVLPFF). At 744–766 (HRLYPNSHYLHRLMVLFLTFSPT) the chain is on the cytoplasmic side. Residues 767 to 787 (FIILTISYEGLFYFVFCMTLV) form a helical membrane-spanning segment. Topologically, residues 788–841 (TWVRLEHAIYVYTARSSAHYGGNNTVPKKPGLNATAVIDGQEYRYRRLGLADTR) are lumenal. N-linked (GlcNAc...) asparagine glycosylation is found at Asn810 and Asn820. The helical transmembrane segment at 842–862 (VALFFFFLLQSAFFSTGNIAS) threads the bilayer. Residues 863-884 (VSSFSLESVFRLIPVFSPFSQS) are Cytoplasmic-facing. A helical membrane pass occupies residues 885–905 (ALLILKLLIPFAIISANLGIL). At 906-914 (NRRLEVAPS) the chain is on the lumenal side. A helical transmembrane segment spans residues 915–935 (ALFMVVMSISDVMTLNFFYMV). At 936 to 951 (RDEGSWLDIGTTISHF) the chain is on the cytoplasmic side. The helical transmembrane segment at 952 to 972 (LIASFLCTFVAGLEFLSEVFI) threads the bilayer. The Lumenal segment spans residues 973-1032 (SGVDFGPTTKAIGASITKTVGGTAGSDVVDSQSGPEDAANSKKAEGLEGSETIRQNGGSV). Positions 994–1032 (GTAGSDVVDSQSGPEDAANSKKAEGLEGSETIRQNGGSV) are disordered.

The protein belongs to the PIGG/PIGN/PIGO family. PIGN subfamily.

The protein resides in the endoplasmic reticulum membrane. The protein operates within glycolipid biosynthesis; glycosylphosphatidylinositol-anchor biosynthesis. Functionally, ethanolamine phosphate transferase involved in glycosylphosphatidylinositol-anchor biosynthesis. Transfers ethanolamine phosphate to the first alpha-1,4-linked mannose of the glycosylphosphatidylinositol precursor of GPI-anchor. This chain is GPI ethanolamine phosphate transferase 1 (mcd4), found in Aspergillus fumigatus (strain ATCC MYA-4609 / CBS 101355 / FGSC A1100 / Af293) (Neosartorya fumigata).